The primary structure comprises 671 residues: UvrABC system protein B (671 aa).

The Helicase ATP-binding domain maps to 31–414 (DGFEQGEKAQ…ELNQTDHKVE (384 aa)). Residue 44 to 51 (GATGTGKT) participates in ATP binding. The short motif at 97-120 (YYDYYQPEAYVPQSDTYIEKDSSI) is the Beta-hairpin element. Positions 435–601 (QIDDLVGEVN…TIVKPIRDVI (167 aa)) constitute a Helicase C-terminal domain. Residues 630–665 (QNMIKTLTAQMQEAAKKLDFEEAANLRDAIMDLKKQ) form the UVR domain.

It belongs to the UvrB family. In terms of assembly, forms a heterotetramer with UvrA during the search for lesions. Interacts with UvrC in an incision complex.

It localises to the cytoplasm. Its function is as follows. The UvrABC repair system catalyzes the recognition and processing of DNA lesions. A damage recognition complex composed of 2 UvrA and 2 UvrB subunits scans DNA for abnormalities. Upon binding of the UvrA(2)B(2) complex to a putative damaged site, the DNA wraps around one UvrB monomer. DNA wrap is dependent on ATP binding by UvrB and probably causes local melting of the DNA helix, facilitating insertion of UvrB beta-hairpin between the DNA strands. Then UvrB probes one DNA strand for the presence of a lesion. If a lesion is found the UvrA subunits dissociate and the UvrB-DNA preincision complex is formed. This complex is subsequently bound by UvrC and the second UvrB is released. If no lesion is found, the DNA wraps around the other UvrB subunit that will check the other stand for damage. This Lactobacillus johnsonii (strain CNCM I-12250 / La1 / NCC 533) protein is UvrABC system protein B.